The primary structure comprises 212 residues: Mediator of RNA polymerase II transcription subunit 20 (212 aa).

This sequence belongs to the Mediator complex subunit 20 family. Component of the Mediator complex, which is composed of MED1, MED4, MED6, MED7, MED8, MED9, MED10, MED11, MED12, MED13, MED13L, MED14, MED15, MED16, MED17, MED18, MED19, MED20, MED21, MED22, MED23, MED24, MED25, MED26, MED27, MED29, MED30, MED31, CCNC, CDK8 and CDC2L6/CDK11. The MED12, MED13, CCNC and CDK8 subunits form a distinct module termed the CDK8 module. Mediator containing the CDK8 module is less active than Mediator lacking this module in supporting transcriptional activation. Individual preparations of the Mediator complex lacking one or more distinct subunits have been variously termed ARC, CRSP, DRIP, PC2, SMCC and TRAP. Interacts with PPARG.

Its subcellular location is the nucleus. Its function is as follows. Component of the Mediator complex, a coactivator involved in the regulated transcription of nearly all RNA polymerase II-dependent genes. Mediator functions as a bridge to convey information from gene-specific regulatory proteins to the basal RNA polymerase II transcription machinery. Mediator is recruited to promoters by direct interactions with regulatory proteins and serves as a scaffold for the assembly of a functional preinitiation complex with RNA polymerase II and the general transcription factors. The sequence is that of Mediator of RNA polymerase II transcription subunit 20 (Med20) from Rattus norvegicus (Rat).